Consider the following 345-residue polypeptide: UPF0324 membrane protein Cgl0015/cg0018 (345 aa).

10 helical membrane passes run 15 to 37 (LRTG…VLIA), 44 to 66 (FSGV…LIQL), 81 to 103 (LLRL…SLGF), 105 to 124 (MLAV…ILMG), 134 to 156 (VLLI…EGVT), 163 to 185 (VVTA…PFAT), 205 to 227 (EIAQ…AVVV), 261 to 280 (VVPL…STVA), 285 to 307 (VIAA…LGCG), and 320 to 342 (PFIL…TLLT).

The protein belongs to the UPF0324 family.

The protein localises to the cell membrane. This is UPF0324 membrane protein Cgl0015/cg0018 from Corynebacterium glutamicum (strain ATCC 13032 / DSM 20300 / JCM 1318 / BCRC 11384 / CCUG 27702 / LMG 3730 / NBRC 12168 / NCIMB 10025 / NRRL B-2784 / 534).